The following is a 182-amino-acid chain: NADH-ubiquinone oxidoreductase 20 kDa subunit (182 aa).

[4Fe-4S] cluster is bound by residues C57, C58, C122, and C152.

Belongs to the complex I 20 kDa subunit family. [4Fe-4S] cluster serves as cofactor.

It localises to the mitochondrion. The enzyme catalyses a ubiquinone + NADH + 5 H(+)(in) = a ubiquinol + NAD(+) + 4 H(+)(out). This chain is NADH-ubiquinone oxidoreductase 20 kDa subunit (NAD10), found in Reclinomonas americana.